Here is a 315-residue protein sequence, read N- to C-terminus: Ribosomal protein L11 methyltransferase (315 aa).

Residues T162, G183, D205, and N248 each contribute to the S-adenosyl-L-methionine site.

The protein belongs to the methyltransferase superfamily. PrmA family.

The protein localises to the cytoplasm. It carries out the reaction L-lysyl-[protein] + 3 S-adenosyl-L-methionine = N(6),N(6),N(6)-trimethyl-L-lysyl-[protein] + 3 S-adenosyl-L-homocysteine + 3 H(+). Functionally, methylates ribosomal protein L11. This is Ribosomal protein L11 methyltransferase from Oceanobacillus iheyensis (strain DSM 14371 / CIP 107618 / JCM 11309 / KCTC 3954 / HTE831).